The following is a 75-amino-acid chain: uncharacterized protein (75 aa).

A signal peptide spans 1-21 (MRLIVVSIMVTLLSGCGSIIS).

This sequence to E.coli YidQ.

This is an uncharacterized protein from Escherichia coli O157:H7.